A 259-amino-acid polypeptide reads, in one-letter code: Potassium/proton antiporter CemA (259 aa).

4 helical membrane-spanning segments follow: residues 47 to 67 (CLLV…EPWV), 136 to 156 (IITH…YLVM), 184 to 204 (ILLA…ELLI), and 219 to 239 (IISS…KYWI).

It belongs to the CemA family.

Its subcellular location is the plastid. It localises to the chloroplast inner membrane. The catalysed reaction is K(+)(in) + H(+)(out) = K(+)(out) + H(+)(in). Functionally, contributes to K(+)/H(+) antiport activity by supporting proton efflux to control proton extrusion and homeostasis in chloroplasts in a light-dependent manner to modulate photosynthesis. Prevents excessive induction of non-photochemical quenching (NPQ) under continuous-light conditions. Indirectly promotes efficient inorganic carbon uptake into chloroplasts. The sequence is that of Potassium/proton antiporter CemA from Welwitschia mirabilis (Tree tumbo).